A 94-amino-acid chain; its full sequence is Small ribosomal subunit protein uS19 (94 aa).

This sequence belongs to the universal ribosomal protein uS19 family.

Its function is as follows. Protein S19 forms a complex with S13 that binds strongly to the 16S ribosomal RNA. In Acetivibrio thermocellus (strain ATCC 27405 / DSM 1237 / JCM 9322 / NBRC 103400 / NCIMB 10682 / NRRL B-4536 / VPI 7372) (Clostridium thermocellum), this protein is Small ribosomal subunit protein uS19.